The primary structure comprises 438 residues: V-type ATP synthase beta chain (438 aa).

The protein belongs to the ATPase alpha/beta chains family.

Its function is as follows. Produces ATP from ADP in the presence of a proton gradient across the membrane. The V-type beta chain is a regulatory subunit. In Chlamydia abortus (strain DSM 27085 / S26/3) (Chlamydophila abortus), this protein is V-type ATP synthase beta chain.